A 206-amino-acid polypeptide reads, in one-letter code: High frequency lysogenization protein HflD homolog (206 aa).

The protein belongs to the HflD family.

The protein localises to the cytoplasm. It localises to the cell inner membrane. The sequence is that of High frequency lysogenization protein HflD homolog from Pseudomonas syringae pv. tomato (strain ATCC BAA-871 / DC3000).